The chain runs to 377 residues: MSFSFGFTSNDFDDDELVAQPETFVESSKENENTTAYINPLDSDFLSQAGVVQPNVEDLGTILESLKDVRLTFEEFQSPIYRKPLIKRELFDVKHQLMLETDAQSNNNSTELDILLGDTSEDLRKNIYEGGLKSWECSYDLVDLLSENVDRISNDIDAVVEIGCGTALPSEFLFRSALLRNDRSKGLKFVLTDYNASVLRLVTIPNLVITWAKTVLTKEQWYALQKDECEDIPINNEELLLTSKLLAAFYDDVQSRNISVTLISGSWGRKFSNLIHEVLSGSQKVLSLSSETIYQPDNLPVIAETILDIHNLPQTDVKTYVAAKDIYFGVGGSITEFEAYLDDKINSEHLPIHSERFKVNSGLKRSIICIETNKAIR.

The protein belongs to the methyltransferase superfamily. METTL18 family.

It is found in the cytoplasm. It localises to the nucleus. It catalyses the reaction L-histidyl-[protein] + S-adenosyl-L-methionine = N(tele)-methyl-L-histidyl-[protein] + S-adenosyl-L-homocysteine + H(+). In terms of biological role, protein-histidine N-methyltransferase that mediates methylation of RPL3 at 'His-243'. Methylates ribosome-associated RPL3, but not free RPL3, thereby regulating 60S subunit assembly. In addition to RPL3, mediates His methylation of other proteins. The sequence is that of Histidine protein methyltransferase 1 from Saccharomyces cerevisiae (strain ATCC 204508 / S288c) (Baker's yeast).